Here is a 122-residue protein sequence, read N- to C-terminus: MRPGEIITGDGPVPLNPGRPRVRITVVNRADRAVQVGSHYHFAAVNEGLEFDRAAAWGHRLDVPAGTAVRFEPGVEREVRLVPVGGSRRVPGLRPEYAGELDGRGHEPTAPNYGEKGQGHFE.

A disordered region spans residues 92-122; sequence GLRPEYAGELDGRGHEPTAPNYGEKGQGHFE.

Belongs to the urease beta subunit family. As to quaternary structure, heterotrimer of UreA (gamma), UreB (beta) and UreC (alpha) subunits. Three heterotrimers associate to form the active enzyme.

Its subcellular location is the cytoplasm. The enzyme catalyses urea + 2 H2O + H(+) = hydrogencarbonate + 2 NH4(+). It functions in the pathway nitrogen metabolism; urea degradation; CO(2) and NH(3) from urea (urease route): step 1/1. The protein is Urease subunit beta of Saccharopolyspora erythraea (strain ATCC 11635 / DSM 40517 / JCM 4748 / NBRC 13426 / NCIMB 8594 / NRRL 2338).